Consider the following 316-residue polypeptide: Acetaldehyde dehydrogenase (316 aa).

Position 11 to 14 (11 to 14 (SGNI)) interacts with NAD(+). C131 serves as the catalytic Acyl-thioester intermediate. NAD(+) is bound by residues 162–170 (SAGPGTRAN) and N289.

It belongs to the acetaldehyde dehydrogenase family. As to quaternary structure, interacts with MhpE.

The catalysed reaction is acetaldehyde + NAD(+) + CoA = acetyl-CoA + NADH + H(+). Its pathway is aromatic compound metabolism; 3-phenylpropanoate degradation. Catalyzes the conversion of acetaldehyde to acetyl-CoA, using NAD(+) and coenzyme A. Is the final enzyme in the meta-cleavage pathway for the degradation of aromatic compounds. In Escherichia coli O81 (strain ED1a), this protein is Acetaldehyde dehydrogenase.